The primary structure comprises 331 residues: NADH-quinone oxidoreductase subunit H (331 aa).

The next 9 membrane-spanning stretches (helical) occupy residues 5 to 25, 45 to 65, 78 to 98, 122 to 142, 156 to 176, 192 to 212, 245 to 265, 271 to 291, and 311 to 331; these read LFFVITTIVKAVVILAVMASL, GPDMVGPAGVLQIVADMIKLF, FIFLIAPLISAIAAFAALAPV, VLYIAGVAAVCVFSPLAAGLA, VVALLSFEVVAGMALLSVVMV, IFNWLIFKQPLAFVLFVMASF, FFIGEYTNMIAASIIITLLFL, FLFIPGALMIILKSSLVFFFF, and WKILLPLGILNVVITGFALLI.

It belongs to the complex I subunit 1 family. As to quaternary structure, NDH-1 is composed of 14 different subunits. Subunits NuoA, H, J, K, L, M, N constitute the membrane sector of the complex.

It is found in the cell inner membrane. The enzyme catalyses a quinone + NADH + 5 H(+)(in) = a quinol + NAD(+) + 4 H(+)(out). Functionally, NDH-1 shuttles electrons from NADH, via FMN and iron-sulfur (Fe-S) centers, to quinones in the respiratory chain. The immediate electron acceptor for the enzyme in this species is believed to be ubiquinone. Couples the redox reaction to proton translocation (for every two electrons transferred, four hydrogen ions are translocated across the cytoplasmic membrane), and thus conserves the redox energy in a proton gradient. This subunit may bind ubiquinone. This Campylobacter concisus (strain 13826) protein is NADH-quinone oxidoreductase subunit H.